The sequence spans 277 residues: Glutamate racemase (277 aa).

Substrate is bound by residues 25–26 (DS) and 57–58 (YG). C89 functions as the Proton donor/acceptor in the catalytic mechanism. Substrate is bound at residue 90-91 (NT). Catalysis depends on C204, which acts as the Proton donor/acceptor. 205-206 (TH) contacts substrate.

It belongs to the aspartate/glutamate racemases family.

It carries out the reaction L-glutamate = D-glutamate. Its pathway is cell wall biogenesis; peptidoglycan biosynthesis. Provides the (R)-glutamate required for cell wall biosynthesis. This chain is Glutamate racemase, found in Brucella ovis (strain ATCC 25840 / 63/290 / NCTC 10512).